A 446-amino-acid chain; its full sequence is MSKKLYIKTYGCQMNVYDSVKMQDLLYPFGYESTENIKEADVIILNTCHIREKAAEKIYSELGRIKKLQDTRKKHGLSSAIIVVAGCVAQAEGEEIFTRTPYVDIVVGPQSYYNLPELISKVVRHEKHLIDLDFVEEAKFDQLPEQLYPQGASAFISVQEGCDKFCTFCVVPYTRGVEFSRNVEQVYREALKVVSNGAREIMLLGQNVNAYHGKGVDDKIFSLADLIRYLAQIPNLERLRYTTSHPIDMTDDLIKLHSIESKLMPFVHLPVQSGSNKILKAMNRKHDREYYFNIINRLREARPDIVLSSDFIVGFPGETDEDFEDTLDLVRKIKYGQCYSFKYSPRPGTPGATRTDQIPEHIKSERLTILQKELSSQQLAFNESCVGSTMKVLFDRSGKFDGQIIGKTPYMQSVYINNTNQDLLCKIIDVKITKATSNSLTGEIYT.

The MTTase N-terminal domain occupies 3-124; that stretch reads KKLYIKTYGC…LPELISKVVR (122 aa). [4Fe-4S] cluster contacts are provided by C12, C48, C87, C162, C166, and C169. Residues 148–380 form the Radical SAM core domain; sequence YPQGASAFIS…QKELSSQQLA (233 aa). Residues 383–446 form the TRAM domain; it reads ESCVGSTMKV…SNSLTGEIYT (64 aa).

Belongs to the methylthiotransferase family. MiaB subfamily. Monomer. [4Fe-4S] cluster is required as a cofactor.

Its subcellular location is the cytoplasm. It catalyses the reaction N(6)-dimethylallyladenosine(37) in tRNA + (sulfur carrier)-SH + AH2 + 2 S-adenosyl-L-methionine = 2-methylsulfanyl-N(6)-dimethylallyladenosine(37) in tRNA + (sulfur carrier)-H + 5'-deoxyadenosine + L-methionine + A + S-adenosyl-L-homocysteine + 2 H(+). Functionally, catalyzes the methylthiolation of N6-(dimethylallyl)adenosine (i(6)A), leading to the formation of 2-methylthio-N6-(dimethylallyl)adenosine (ms(2)i(6)A) at position 37 in tRNAs that read codons beginning with uridine. The protein is tRNA-2-methylthio-N(6)-dimethylallyladenosine synthase of Rickettsia canadensis (strain McKiel).